The following is a 460-amino-acid chain: MATGKIVQVIGAVVDVEFPQDAVPRVYDALEVQNGNEHLVLEVQQQLGGGIVRTIAMGSSDGLRRGLDVKDLEHPIEVPVGKATLGRIMNVLGEPVDMKGEIGEEERWAIHRAAPSYEELSNSQELLETGIKVIDLMCPFAKGGKVGLFGGAGVGKTVNMMELIRNIAIEHSGYSVFAGVGERTREGNDFYHEMTDSNVIDKVSLVYGQMNEPPGNRLRVALTGLTMAEKFRDEGRDVLLFVDNIYRYTLAGTEVSALLGRMPSAVGYQPTLAEEMGVLQERITSTKTGSITSVQAVYVPADDLTDPSPATTFAHLDATVVLSRQIASLGIYPAVDPLDSTSRQLDPLVVGQEHYDTARGVQSILQRYQELKDIIAILGMDELSEEDKLVVARARKIQRFLSQPFFVAEVFTGSPGKYVSLKDTIRGFKGIMEGEYDHLPEQAFYMVGSIDEAVEKAKKL.

An ATP-binding site is contributed by 150-157 (GGAGVGKT).

The protein belongs to the ATPase alpha/beta chains family. As to quaternary structure, F-type ATPases have 2 components, CF(1) - the catalytic core - and CF(0) - the membrane proton channel. CF(1) has five subunits: alpha(3), beta(3), gamma(1), delta(1), epsilon(1). CF(0) has three main subunits: a(1), b(2) and c(9-12). The alpha and beta chains form an alternating ring which encloses part of the gamma chain. CF(1) is attached to CF(0) by a central stalk formed by the gamma and epsilon chains, while a peripheral stalk is formed by the delta and b chains.

It localises to the cell inner membrane. The enzyme catalyses ATP + H2O + 4 H(+)(in) = ADP + phosphate + 5 H(+)(out). Functionally, produces ATP from ADP in the presence of a proton gradient across the membrane. The catalytic sites are hosted primarily by the beta subunits. This chain is ATP synthase subunit beta, found in Citrobacter koseri (strain ATCC BAA-895 / CDC 4225-83 / SGSC4696).